A 575-amino-acid chain; its full sequence is Septation ring formation regulator EzrA (575 aa).

Topologically, residues 1 to 8 (MSNGQLIY) are extracellular. Residues 9-27 (LMVAIAVILVLAYVVAIFL) traverse the membrane as a helical segment. The Cytoplasmic portion of the chain corresponds to 28–575 (RKRNEGRLEA…YEKTRETIRF (548 aa)). Coiled coils occupy residues 105–191 (LKAS…FVTL), 265–301 (LYEA…LYDI), 354–416 (VRRI…IEKD), and 456–526 (TASN…IQEA).

It belongs to the EzrA family.

Its subcellular location is the cell membrane. Negative regulator of FtsZ ring formation; modulates the frequency and position of FtsZ ring formation. Inhibits FtsZ ring formation at polar sites. Interacts either with FtsZ or with one of its binding partners to promote depolymerization. This chain is Septation ring formation regulator EzrA, found in Streptococcus pneumoniae serotype 4 (strain ATCC BAA-334 / TIGR4).